Consider the following 188-residue polypeptide: Elongation factor P (188 aa).

The protein belongs to the elongation factor P family.

Its subcellular location is the cytoplasm. Its pathway is protein biosynthesis; polypeptide chain elongation. Its function is as follows. Involved in peptide bond synthesis. Stimulates efficient translation and peptide-bond synthesis on native or reconstituted 70S ribosomes in vitro. Probably functions indirectly by altering the affinity of the ribosome for aminoacyl-tRNA, thus increasing their reactivity as acceptors for peptidyl transferase. The chain is Elongation factor P from Wolbachia pipientis subsp. Culex pipiens (strain wPip).